A 348-amino-acid polypeptide reads, in one-letter code: Dihydroorotase (348 aa).

Positions 17 and 19 each coordinate Zn(2+). Residues 19 to 21 and Asn-45 contribute to the substrate site; that span reads HLR. Zn(2+)-binding residues include Lys-103, His-140, and His-178. N6-carboxylysine is present on Lys-103. His-140 contacts substrate. Residue Leu-223 coordinates substrate. Asp-251 contacts Zn(2+). The active site involves Asp-251. The substrate site is built by His-255 and Ala-267.

Belongs to the metallo-dependent hydrolases superfamily. DHOase family. Class II DHOase subfamily. In terms of assembly, homodimer. Requires Zn(2+) as cofactor.

It catalyses the reaction (S)-dihydroorotate + H2O = N-carbamoyl-L-aspartate + H(+). The protein operates within pyrimidine metabolism; UMP biosynthesis via de novo pathway; (S)-dihydroorotate from bicarbonate: step 3/3. In terms of biological role, catalyzes the reversible cyclization of carbamoyl aspartate to dihydroorotate. The protein is Dihydroorotase of Yersinia enterocolitica serotype O:8 / biotype 1B (strain NCTC 13174 / 8081).